Here is a 466-residue protein sequence, read N- to C-terminus: Glycosyl hydrolase family 109 protein (466 aa).

The tat-type signal signal peptide spans 1-30 (MENTRRSFLKKVSAAGIGAAGLAMAGNAGA). Residues 59-60 (SR), Asp-81, 130-133 (WEWH), 151-152 (EV), and Asn-180 each bind NAD(+). Tyr-209 is a substrate binding site. 241–245 (AEAQW) is an NAD(+) binding site. Substrate contacts are provided by residues Arg-246, 258-261 (YPTH), and Tyr-340. Residue Tyr-258 participates in NAD(+) binding.

It belongs to the Gfo/Idh/MocA family. Glycosyl hydrolase 109 subfamily. NAD(+) is required as a cofactor. In terms of processing, predicted to be exported by the Tat system. The position of the signal peptide cleavage has not been experimentally proven.

Its function is as follows. Glycosidase. This is Glycosyl hydrolase family 109 protein from Parabacteroides distasonis (strain ATCC 8503 / DSM 20701 / CIP 104284 / JCM 5825 / NCTC 11152).